The chain runs to 754 residues: 5-methyltetrahydropteroyltriglutamate--homocysteine methyltransferase (754 aa).

5-methyltetrahydropteroyltri-L-glutamate is bound by residues 17-20 (RELK) and lysine 117. Residues 431 to 433 (IGS) and glutamate 484 each bind L-homocysteine. L-methionine contacts are provided by residues 431–433 (IGS) and glutamate 484. 5-methyltetrahydropteroyltri-L-glutamate contacts are provided by residues 515-516 (RC) and tryptophan 561. Aspartate 599 contacts L-homocysteine. L-methionine is bound at residue aspartate 599. Residue glutamate 605 participates in 5-methyltetrahydropteroyltri-L-glutamate binding. Zn(2+)-binding residues include histidine 641, cysteine 643, and glutamate 665. Histidine 694 serves as the catalytic Proton donor. Cysteine 726 contacts Zn(2+).

Belongs to the vitamin-B12 independent methionine synthase family. Zn(2+) serves as cofactor.

It carries out the reaction 5-methyltetrahydropteroyltri-L-glutamate + L-homocysteine = tetrahydropteroyltri-L-glutamate + L-methionine. Its pathway is amino-acid biosynthesis; L-methionine biosynthesis via de novo pathway; L-methionine from L-homocysteine (MetE route): step 1/1. Functionally, catalyzes the transfer of a methyl group from 5-methyltetrahydrofolate to homocysteine resulting in methionine formation. The chain is 5-methyltetrahydropteroyltriglutamate--homocysteine methyltransferase from Salmonella dublin (strain CT_02021853).